A 226-amino-acid polypeptide reads, in one-letter code: Putative integrase V10 (226 aa).

Catalysis depends on residues Arg-97, His-174, and Arg-177. Tyr-210 serves as the catalytic O-(3'-phospho-DNA)-tyrosine intermediate.

Belongs to the 'phage' integrase family.

In terms of biological role, may catalyze site-specific integration of viral genome into host or helper virus DNA. The sequence is that of Putative integrase V10 from Acanthamoeba polyphaga (Amoeba).